A 782-amino-acid polypeptide reads, in one-letter code: Protein NEDD1 (782 aa).

WD repeat units lie at residues 1 to 34 (MMSN…GDPC), 41 to 80 (SPGC…LGTV), 90 to 130 (SAEE…CIKK), 133 to 172 (GHTS…RATE), 176 to 216 (PNGQ…PKMS), 220 to 260 (QHSA…SSSC), 262 to 301 (AYEA…QPVT), and 307 to 358 (SNSE…TPSA). 2 disordered regions span residues 350–393 (PLPS…WPSG) and 467–512 (PIFD…EAWG). 3 stretches are compositionally biased toward polar residues: residues 352–362 (PSTTPSASQSA), 370–386 (VSAS…TPNR), and 488–498 (SFGSITPTASS). Residues 753–782 (VLSSILENQAEQMKELKLLRKENQELRQRL) adopt a coiled-coil conformation.

In terms of tissue distribution, expressed in root meristematic cells.

Its subcellular location is the nucleus envelope. It localises to the chromosome. The protein resides in the centromere. It is found in the kinetochore. The protein localises to the cytoplasm. Its subcellular location is the cytoskeleton. It localises to the phragmoplast. The protein resides in the microtubule organizing center. In terms of biological role, regulates microtubules organization in a centrosome-independent manner. Required for the spindle to be positioned correctly and for the function of gamma-tubulin in organizing phragmoplast microtubules. Component of active gamma-tubulin ring complexes (gamma-TuRCs) associated with cortical microtubules in interphase cells. Mediates gamma-TuRC recruitment to the nucleation sites and is important for determining the ratio of branched to parallel nucleation. May mediate the localization of GCP2 and GCP3 to the nuclear envelope. In Arabidopsis thaliana (Mouse-ear cress), this protein is Protein NEDD1.